The following is a 471-amino-acid chain: Nuclear distribution protein PAC1 (471 aa).

A LisH domain is found at 9 to 41 (QAEELHKSMIAYLLSVNLSKSAAALREELADSV). Residues 60-87 (TSVVRLQKKIMDLESRNAALQQELDSAT) adopt a coiled-coil conformation. The segment covering 83–93 (LDSATPTSLSR) has biased composition (polar residues). Positions 83–108 (LDSATPTSLSRRNQDPASWLPRAPAR) are disordered. WD repeat units follow at residues 113-154 (SHRG…RTIK), 156-196 (HTRA…KNIR), 200-247 (GHDH…CVKT), 250-289 (GHLD…TKST), 292-352 (GHEH…IKTL), 354-393 (GHDN…KCVR), 398-428 (AHGH…INGQ), and 429-467 (GTPS…MNVR). The segment at 424 to 449 (GINGQGTPSMNGVSISTTSKKEDTGG) is disordered. A compositionally biased stretch (polar residues) spans 428–441 (QGTPSMNGVSISTT).

The protein belongs to the WD repeat LIS1/nudF family. Self-associates. Interacts with NDL1 and dynein.

The protein localises to the cytoplasm. It is found in the cytoskeleton. The protein resides in the spindle pole. In terms of biological role, positively regulates the activity of the minus-end directed microtubule motor protein dynein. May enhance dynein-mediated microtubule sliding by targeting dynein to the microtubule plus end. Required for nuclear migration during vegetative growth as well as development. Required for retrograde early endosome (EE) transport from the hyphal tip. Required for localization of dynein to the mitotic spindle poles. Recruits additional proteins to the dynein complex at SPBs. In Coccidioides posadasii (strain C735) (Valley fever fungus), this protein is Nuclear distribution protein PAC1.